A 487-amino-acid polypeptide reads, in one-letter code: MASKLFLAAALLQGALSSPLAVEERQACAAQWGQCGGQDYTGPTCCQSGSTCVVSNQWYSQCLPGSSNPTTTSRTSTSSSSSTSRTSSSTSRPPSSVPTTPTSVPPTITTTPTTTPTGGSGPGTTASFTGNPFAGVNLFPNKFYSSEVHTLAIPSLTGSLVAKASAVAQVPSFQWLDIAAKVETLMPGALADVRAANAAGGNYAAQLVVYDLPDRDCAAAASNGEFSIADGGVVKYKAYIDAIRKQLLAYSDVRTILVIEPDSLANMVTNMGVPKCAGAKDAYLECTIYAVKQLNLPHVAMYLDGGHAGWLGWPANLQPAADLFGKLYADAGKPSQLRGMATNVANYNAWDLTTAPSYTTPNPNFDEKKYISAFAPLLAAKGWSAHFIIDQGRSGKQPTGQKEWGHWCNQQGVGFGRRPSANTGSELADAFVWIKPGGECDGVSDPTAPRFDHFCGTDYGAMSDAPQAGQWFQKYFEMLLTNANPPL.

Residues 1–17 (MASKLFLAAALLQGALS) form the signal peptide. Residues 27-63 (ACAAQWGQCGGQDYTGPTCCQSGSTCVVSNQWYSQCL) form the CBM1 domain. 2 disulfides stabilise this stretch: C35–C52 and C46–C62. Residues 64–117 (PGSSNPTTTSRTSTSSSSSTSRTSSSTSRPPSSVPTTPTSVPPTITTTPTTTPT) are compositionally biased toward low complexity. The segment at 64 to 127 (PGSSNPTTTS…GGSGPGTTAS (64 aa)) is disordered. Substrate contacts are provided by W175 and D177. D216 is a catalytic residue. D262 serves as the catalytic Proton donor. H307, W310, N346, W407, K435, and E439 together coordinate substrate. The active-site Proton acceptor is the D441.

Belongs to the glycosyl hydrolase 6 (cellulase B) family.

It localises to the secreted. The enzyme catalyses Hydrolysis of (1-&gt;4)-beta-D-glucosidic linkages in cellulose and cellotetraose, releasing cellobiose from the non-reducing ends of the chains.. Functionally, exoglucanase that plays an important function in biomass degradation by catalyzing the hydrolysis of the non-reducing end beta-1,4-glucosidic linkages in cellulose and cellotetraose to release cellobiose. Shows higher hydrolytic activities on phosphoric acid-swollen cellulose (PSC), beta-glucan, and cellooligosaccharide derivatives than on cellulose, of which the best substrates were cellooligosaccharides. This chain is 1,4-beta-D-glucan cellobiohydrolase CEL6A, found in Pyricularia oryzae (strain 70-15 / ATCC MYA-4617 / FGSC 8958) (Rice blast fungus).